We begin with the raw amino-acid sequence, 695 residues long: Transketolase (695 aa).

Histidine 37 contacts substrate. Residues histidine 77 and 126–128 contribute to the thiamine diphosphate site; that span reads GPL. Aspartate 164 contacts Mg(2+). The thiamine diphosphate site is built by glycine 165 and asparagine 194. The Mg(2+) site is built by asparagine 194 and isoleucine 196. Histidine 268, arginine 361, and serine 388 together coordinate substrate. Thiamine diphosphate is bound at residue histidine 268. Glutamate 415 (proton donor) is an active-site residue. Phenylalanine 441 contacts thiamine diphosphate. Residues histidine 465, aspartate 473, and arginine 524 each contribute to the substrate site.

Belongs to the transketolase family. Homodimer. Requires Mg(2+) as cofactor. Ca(2+) serves as cofactor. It depends on Mn(2+) as a cofactor. Co(2+) is required as a cofactor. The cofactor is thiamine diphosphate.

The catalysed reaction is D-sedoheptulose 7-phosphate + D-glyceraldehyde 3-phosphate = aldehydo-D-ribose 5-phosphate + D-xylulose 5-phosphate. Its pathway is carbohydrate biosynthesis; Calvin cycle. Catalyzes the transfer of a two-carbon ketol group from a ketose donor to an aldose acceptor, via a covalent intermediate with the cofactor thiamine pyrophosphate. The chain is Transketolase (cbbT) from Sinorhizobium medicae (strain WSM419) (Ensifer medicae).